Reading from the N-terminus, the 134-residue chain is ATP synthase epsilon chain (134 aa).

Belongs to the ATPase epsilon chain family. As to quaternary structure, F-type ATPases have 2 components, CF(1) - the catalytic core - and CF(0) - the membrane proton channel. CF(1) has five subunits: alpha(3), beta(3), gamma(1), delta(1), epsilon(1). CF(0) has three main subunits: a, b and c.

It localises to the cell membrane. In terms of biological role, produces ATP from ADP in the presence of a proton gradient across the membrane. In Priestia megaterium (strain ATCC 12872 / QMB1551) (Bacillus megaterium), this protein is ATP synthase epsilon chain (atpC).